The following is a 31-amino-acid chain: GFNPCGETCQIDQTCHAPGCTCSIANICVRN.

Residues 1–31 (GFNPCGETCQIDQTCHAPGCTCSIANICVRN) constitute a cross-link (cyclopeptide (Gly-Asn)). 3 cysteine pairs are disulfide-bonded: C5-C20, C9-C22, and C15-C28.

Post-translationally, this is a cyclic peptide.

Functionally, probably participates in a plant defense mechanism. This is Cyclotide psybry C from Psychotria brachyceras.